A 487-amino-acid chain; its full sequence is Solute carrier family 22 member 15-like (487 aa).

The chain crosses the membrane as a helical span at residues 22 to 42 (AFLTLLQVYVACQSMLIVLVG). Asn-70 carries an N-linked (GlcNAc...) asparagine glycan. 11 consecutive transmembrane segments (helical) span residues 90 to 110 (LASS…GPLS), 117 to 137 (PVYL…ALAP), 141 to 161 (VFAV…LVSF), 178 to 198 (SLTN…GFYI), 203 to 223 (TLAF…FLLP), 286 to 306 (ILLM…TLNA), 315 to 335 (LNVA…LYFI), 345 to 365 (ATAG…FLPE), 374 to 394 (TVLA…VYIY), 406 to 426 (AGLG…PFIP), and 435 to 455 (MPFV…LLLP).

It belongs to the major facilitator (TC 2.A.1) superfamily. Organic cation transporter (TC 2.A.1.19) family.

The protein localises to the membrane. Its function is as follows. Probably transports organic cations. The sequence is that of Solute carrier family 22 member 15-like (slc22a15b) from Xenopus tropicalis (Western clawed frog).